The sequence spans 131 residues: UPF0102 protein Ent638_3585 (131 aa).

The interval Met1 to Gly20 is disordered.

The protein belongs to the UPF0102 family.

This Enterobacter sp. (strain 638) protein is UPF0102 protein Ent638_3585.